We begin with the raw amino-acid sequence, 145 residues long: Large ribosomal subunit protein uL13 (145 aa).

The segment at 72–91 is disordered; it reads DKMYHRHSNHPGGLKSISAG.

Belongs to the universal ribosomal protein uL13 family. As to quaternary structure, part of the 50S ribosomal subunit.

Its function is as follows. This protein is one of the early assembly proteins of the 50S ribosomal subunit, although it is not seen to bind rRNA by itself. It is important during the early stages of 50S assembly. This is Large ribosomal subunit protein uL13 from Staphylococcus epidermidis (strain ATCC 12228 / FDA PCI 1200).